We begin with the raw amino-acid sequence, 213 residues long: Reticulon-3 (213 aa).

Polar residues predominate over residues 1–16 (MADTSGPQSSHISSSA). A disordered region spans residues 1–20 (MADTSGPQSSHISSSAGEKG). The region spanning 25–213 (VQDLLYWRDV…LPGALKKKSE (189 aa)) is the Reticulon domain. The next 2 helical transmembrane spans lie at 45 to 65 (MVLL…YLVL) and 154 to 174 (VFNG…APIV).

In terms of assembly, homodimer.

The protein localises to the endoplasmic reticulum membrane. It localises to the golgi apparatus membrane. Its function is as follows. May be involved in membrane trafficking in the early secretory pathway. In Xenopus tropicalis (Western clawed frog), this protein is Reticulon-3 (rtn3).